Reading from the N-terminus, the 419-residue chain is Tyrosine--tRNA ligase (419 aa).

Y34 lines the L-tyrosine pocket. The 'HIGH' region motif lies at 39-48 (PTADSLHLGN). Residues Y169 and Q173 each contribute to the L-tyrosine site. The 'KMSKS' region motif lies at 229–233 (KFGKS). K232 contacts ATP. Positions 353 to 419 (LTLIELLISA…GKKKNFVLTY (67 aa)) constitute an S4 RNA-binding domain.

The protein belongs to the class-I aminoacyl-tRNA synthetase family. TyrS type 1 subfamily. Homodimer.

It localises to the cytoplasm. It carries out the reaction tRNA(Tyr) + L-tyrosine + ATP = L-tyrosyl-tRNA(Tyr) + AMP + diphosphate + H(+). In terms of biological role, catalyzes the attachment of tyrosine to tRNA(Tyr) in a two-step reaction: tyrosine is first activated by ATP to form Tyr-AMP and then transferred to the acceptor end of tRNA(Tyr). This is Tyrosine--tRNA ligase from Lactococcus lactis subsp. cremoris (strain SK11).